We begin with the raw amino-acid sequence, 858 residues long: Heat shock protein 105 kDa (858 aa).

The residue at position 2 (Ser-2) is an N-acetylserine. An N6-acetyllysine modification is found at Lys-471. Disordered regions lie at residues 500 to 584 (KVPT…PPEA) and 796 to 858 (CEPV…MDLD). Acidic residues predominate over residues 504 to 514 (EENEMSSEADM). 2 positions are modified to phosphoserine: Ser-509 and Ser-510. Positions 532–554 (QQDNSEAGTQPQVQTDAQQTSQS) are enriched in polar residues. Position 557 is a phosphoserine (Ser-557). Thr-561 carries the phosphothreonine modification. 2 stretches are compositionally biased toward basic and acidic residues: residues 563–584 (EENKIPDADKANEKKVDQPPEA) and 805–814 (PKIESPKLER). Ser-809 is modified (phosphoserine). Thr-815 carries the phosphothreonine modification. Residues 821 to 832 (IDKKEEDLEDKN) are compositionally biased toward basic and acidic residues. Polar residues predominate over residues 849-858 (EKNSVNMDLD).

It belongs to the heat shock protein 70 family. Interacts with HSPA8/HSC70. Interacts with HSPA1A (via NBD) and HSPA1B (via NBD). Post-translationally, phosphorylation on Ser-509 may be important for regulation of the HSPA8/HSC70 chaperone activity.

The protein localises to the cytoplasm. Acts as a nucleotide-exchange factor (NEF) for chaperone proteins HSPA1A and HSPA1B, promoting the release of ADP from HSPA1A/B thereby triggering substrate release. Prevents the aggregation of denatured proteins in cells under severe stress, on which the ATP levels decrease markedly. Inhibits HSPA8/HSC70 ATPase and chaperone activities. The protein is Heat shock protein 105 kDa (HSPH1) of Pongo abelii (Sumatran orangutan).